We begin with the raw amino-acid sequence, 789 residues long: MLLRLVGAAGSRALAWPFSKLWRCGGCAGSGGTVWSSVRACGIALQGHLGRCSQQLALQGKLTSFSPRLYSKPPRGFEKFFKNKKNRKSASPGNSVPPKKEPKNAGPGGDGGNRGGKGDDFPWWKRMQKGEFPWDDKDFRSLAVLGAGVAAGFLYFYFRDPGKEITWKHFVQYYLARGLVDRLEVVNKQFVRVIPVPGTTSERFVWFNIGSVDTFERNLESAQWELGIEPTNQAAVVYTTESDGSFLRSLVPTLVLVSILLYAMRRGPMGTGRGGRGGGLFSVGETTAKILKNNIDVRFADVAGCEEAKLEIMEFVNFLKNPKQYQDLGAKIPKGAMLTGPPGTGKTLLAKATAGEANVPFITVNGSEFLEMFVGVGPARVRDMFAMARKHAPCILFIDEIDAIGRKRGRGHLGGQSEQENTLNQMLVEMDGFNSSTNVVVLAGTNRPDILDPALTRPGRFDRQIYIGPPDIKGRSSIFKVHLRPLKLDGSLSKDALSRKLAALTPGFTGADISNVCNEAALIAARHLSPSVQERHFEQAIERVIGGLEKKTQVLQPSEKTTVAYHEAGHAVVGWFLEHADPLLKVSIIPRGKGLGYAQYLPREQFLYTREQLFDRMCMMLGGRVAEQLFFGQITTGAQDDLRKVTQSAYAQIVQFGMSEKLGQVSFDFPRQGETMVEKPYSEATAQLIDEEVRCLVRSAYNRTLELLTQCREQVEKVGRRLLEKEVLEKADMIELLGPRPFAEKSTYEEFVEGTGSLEEDTSLPEGLKDWNKGREEGGTERGLQESPV.

The transit peptide at 1-70 directs the protein to the mitochondrion; that stretch reads MLLRLVGAAG…KLTSFSPRLY (70 aa). Residues 81–121 form a disordered region; sequence FKNKKNRKSASPGNSVPPKKEPKNAGPGGDGGNRGGKGDDF. Residues 106–115 show a composition bias toward gly residues; the sequence is GPGGDGGNRG. Helical transmembrane passes span 139–158 and 246–264; these read FRSLAVLGAGVAAGFLYFYF and FLRSLVPTLVLVSILLYAM. Residues valine 302, alanine 303, threonine 344, glycine 345, lysine 346, threonine 347, leucine 348, and histidine 482 each contribute to the ATP site. Zn(2+) is bound at residue histidine 566. Residue glutamate 567 is part of the active site. Histidine 570 and aspartate 641 together coordinate Zn(2+). A disordered region spans residues 749 to 789; it reads EEFVEGTGSLEEDTSLPEGLKDWNKGREEGGTERGLQESPV. Residues 767 to 789 show a composition bias toward basic and acidic residues; sequence GLKDWNKGREEGGTERGLQESPV.

In the N-terminal section; belongs to the AAA ATPase family. The protein in the C-terminal section; belongs to the peptidase M41 family. As to quaternary structure, homooligomer. Forms heterohexamers with Spg7 and Afg3l1. The m-AAA protease is either composed of homohexamers of Afg3l2 or heterohexamers of Afg3l1, Afg3l2 and/or Spg7. The cofactor is Zn(2+).

Its subcellular location is the mitochondrion inner membrane. It catalyses the reaction ATP + H2O = ADP + phosphate + H(+). Its function is as follows. Catalytic component of the m-AAA protease, a protease that plays a key role in proteostasis of inner mitochondrial membrane proteins, and which is essential for axonal and neuron development. Afg3l1 possesses both ATPase and protease activities: the ATPase activity is required to unfold substrates, threading them into the internal proteolytic cavity for hydrolysis into small peptide fragments. The m-AAA protease exerts a dual role in the mitochondrial inner membrane: it mediates the processing of specific regulatory proteins and ensures protein quality control by degrading misfolded polypeptides. Required for SPG7 maturation into its active mature form after SPG7 cleavage by mitochondrial-processing peptidase (MPP). This Mus musculus (Mouse) protein is Mitochondrial inner membrane m-AAA protease component AFG3L1.